The following is a 416-amino-acid chain: Tryptophan synthase beta chain (416 aa).

Lys-98 is subject to N6-(pyridoxal phosphate)lysine.

It belongs to the TrpB family. As to quaternary structure, tetramer of two alpha and two beta chains. Pyridoxal 5'-phosphate serves as cofactor.

It catalyses the reaction (1S,2R)-1-C-(indol-3-yl)glycerol 3-phosphate + L-serine = D-glyceraldehyde 3-phosphate + L-tryptophan + H2O. Its pathway is amino-acid biosynthesis; L-tryptophan biosynthesis; L-tryptophan from chorismate: step 5/5. In terms of biological role, the beta subunit is responsible for the synthesis of L-tryptophan from indole and L-serine. This is Tryptophan synthase beta chain from Ruegeria pomeroyi (strain ATCC 700808 / DSM 15171 / DSS-3) (Silicibacter pomeroyi).